The primary structure comprises 593 residues: Autophagy-related protein 22-2 (593 aa).

Residues 42 to 62 form a helical membrane-spanning segment; the sequence is YGVAAEVFAVCGVGSFLPLTL. Asn-90 carries N-linked (GlcNAc...) asparagine glycosylation. The next 3 membrane-spanning stretches (helical) occupy residues 112-132, 159-179, and 181-201; these read SFAMYTFSLAVLIQALTLVSF, LFMLIVPPVFVLGALLVVIGV, and CLGSSFVVLNSFLPILVANDP. The interval 228–261 is disordered; it reads SWTDEEDTGDHAGPAGSKKAVEPEKASSSTSPEL. The next 4 helical transmembrane spans lie at 271–291, 305–325, 377–397, and 415–435; these read GVGLGYCAAVLVQILSILLLF, LPLRFVLLLVGIWWAAFTVVC, VVVFLAAWFLISDAIATVSGT, and LLSITATMSGMAGAFLWPIVA. Residue Asn-443 is glycosylated (N-linked (GlcNAc...) asparagine). A run of 4 helical transmembrane segments spans residues 448–468, 480–500, 525–545, and 548–568; these read LCIALFEIIPLYGMLAYIPFI, WEIFPLGIVHGVVSGGLASYC, KGSSFVGPAIVGALIDATGSV, and GFIFIGVLILLPMPLVWLVNA.

This sequence belongs to the ATG22 family.

It localises to the vacuole membrane. Vacuolar effluxer which mediate the efflux of amino acids resulting from autophagic degradation. The release of autophagic amino acids allows the maintenance of protein synthesis and viability during nitrogen starvation. This chain is Autophagy-related protein 22-2 (atg22-2), found in Emericella nidulans (strain FGSC A4 / ATCC 38163 / CBS 112.46 / NRRL 194 / M139) (Aspergillus nidulans).